We begin with the raw amino-acid sequence, 119 residues long: Protein yippee-like 1 (119 aa).

The Yippee domain maps to 19–116 (RTYSCIHCRA…IELAHMIKDN (98 aa)). 4 residues coordinate Zn(2+): Cys-23, Cys-26, Cys-79, and Cys-82. Residues 99–104 (KYKEGK) carry the Nuclear localization signal motif.

The protein belongs to the yippee family.

It localises to the nucleus. Its function is as follows. May play a role in epithelioid conversion of fibroblasts. The protein is Protein yippee-like 1 (YPEL1) of Chlorocebus aethiops (Green monkey).